A 188-amino-acid polypeptide reads, in one-letter code: dCTP deaminase (188 aa).

Residue 109-114 coordinates dCTP; sequence KSTYAR. Glu135 acts as the Proton donor/acceptor in catalysis. The dCTP site is built by Gln154, Tyr168, and Gln178.

It belongs to the dCTP deaminase family. Homotrimer.

The catalysed reaction is dCTP + H2O + H(+) = dUTP + NH4(+). Its pathway is pyrimidine metabolism; dUMP biosynthesis; dUMP from dCTP (dUTP route): step 1/2. In terms of biological role, catalyzes the deamination of dCTP to dUTP. This Helicobacter hepaticus (strain ATCC 51449 / 3B1) protein is dCTP deaminase.